Here is a 134-residue protein sequence, read N- to C-terminus: U35-theraphotoxin-Cg1a (134 aa).

Residues 1 to 18 (MLVTLLETFSVVFQVANG) form the signal peptide. Positions 19 to 56 (DGNCVPRFQDDVEFCDNYILEAVTEASKMIAPRAREQK) are excised as a propeptide.

Expressed by the venom gland.

It localises to the secreted. Probable secreted venom toxin. The polypeptide is U35-theraphotoxin-Cg1a (Chilobrachys guangxiensis (Chinese earth tiger tarantula)).